The following is a 314-amino-acid chain: MTHTPVLLKEMLSLLSPQDGGIYVDATFGAGGYSKAILESADCKVYAIDRDETVTKFYDDLSVRYPDRIKLFIEKFSNIKSILSSVEPSPVIPVLDTGKNNWSRAGMTSNGVDGVVFDIGVSSMQLDNGDRGFSFLHDGPLDMSMDNSSYINASTFVNALREEEIANTIYNYGGERHSRKIARAIINARKKKTIKTTFELADIVRSVVFRGKSKIDPATRTFQAIRIWVNDELEELEKGIKAASEILSENGKLIVVTFHSLEDRIVKTFFKDLCATDCKTFSLLNKKVIEASIEEVSANPRSRSAKLRAIQRLS.

S-adenosyl-L-methionine contacts are provided by residues 31-33, D49, F76, D118, and Q125; that span reads GGY.

Belongs to the methyltransferase superfamily. RsmH family.

Its subcellular location is the cytoplasm. The enzyme catalyses cytidine(1402) in 16S rRNA + S-adenosyl-L-methionine = N(4)-methylcytidine(1402) in 16S rRNA + S-adenosyl-L-homocysteine + H(+). Its function is as follows. Specifically methylates the N4 position of cytidine in position 1402 (C1402) of 16S rRNA. The chain is Ribosomal RNA small subunit methyltransferase H from Wolbachia pipientis wMel.